A 263-amino-acid polypeptide reads, in one-letter code: Sulfur carrier protein FdhD (263 aa).

The Cysteine persulfide intermediate role is filled by Cys107.

Belongs to the FdhD family.

The protein resides in the cytoplasm. Its function is as follows. Required for formate dehydrogenase (FDH) activity. Acts as a sulfur carrier protein that transfers sulfur from IscS to the molybdenum cofactor prior to its insertion into FDH. The sequence is that of Sulfur carrier protein FdhD from Bacillus licheniformis (strain ATCC 14580 / DSM 13 / JCM 2505 / CCUG 7422 / NBRC 12200 / NCIMB 9375 / NCTC 10341 / NRRL NRS-1264 / Gibson 46).